A 142-amino-acid polypeptide reads, in one-letter code: Regulatory protein RecX (142 aa).

Belongs to the RecX family.

The protein resides in the cytoplasm. Functionally, modulates RecA activity. In Thermus thermophilus (strain ATCC BAA-163 / DSM 7039 / HB27), this protein is Regulatory protein RecX.